The following is a 367-amino-acid chain: 3-ketodihydrosphingosine reductase ksrA (367 aa).

Residues 12–32 (ASPATLGISLILCGFIVYSVS) traverse the membrane as a helical segment. NADPH contacts are provided by glycine 53, serine 55, glycine 57, arginine 78, lysine 82, aspartate 108, and leucine 109. Positions 53-57 (GGSDG) match the GXSXG motif. A helical transmembrane segment spans residues 193–213 (LIFTCSTLAFVSIAGYAPYSP). Tyrosine 211 functions as the Proton acceptor in the catalytic mechanism. NADP(+) contacts are provided by tyrosine 211, lysine 215, and isoleucine 259. Lysine 215 acts as the Lowers pKa of active site Tyr in catalysis.

It belongs to the short-chain dehydrogenases/reductases (SDR) family.

The protein resides in the endoplasmic reticulum membrane. The catalysed reaction is sphinganine + NADP(+) = 3-oxosphinganine + NADPH + H(+). It participates in lipid metabolism; sphingolipid metabolism. Its function is as follows. Catalyzes the reduction of 3'-oxosphinganine (3-ketodihydrosphingosine/KDS) to sphinganine (dihydrosphingosine/DHS), the second step of de novo sphingolipid biosynthesis. The sequence is that of 3-ketodihydrosphingosine reductase ksrA from Aspergillus fumigatus (strain ATCC MYA-4609 / CBS 101355 / FGSC A1100 / Af293) (Neosartorya fumigata).